Here is a 433-residue protein sequence, read N- to C-terminus: tRNA(Ile2) 2-agmatinylcytidine synthetase TiaS (433 aa).

It belongs to the TiaS family.

Its subcellular location is the cytoplasm. The catalysed reaction is cytidine(34) in tRNA(Ile2) + agmatine + ATP + H2O = 2-agmatinylcytidine(34) in tRNA(Ile2) + AMP + 2 phosphate + 2 H(+). Its function is as follows. ATP-dependent agmatine transferase that catalyzes the formation of 2-agmatinylcytidine (agm2C) at the wobble position (C34) of tRNA(Ile2), converting the codon specificity from AUG to AUA. This is tRNA(Ile2) 2-agmatinylcytidine synthetase TiaS from Methanopyrus kandleri (strain AV19 / DSM 6324 / JCM 9639 / NBRC 100938).